The chain runs to 196 residues: Carnitine operon protein CaiE (196 aa).

Residues 173-196 (TQPLRQMEENRPRLQGTTDVTPKR) form a disordered region. A compositionally biased stretch (polar residues) spans 187-196 (QGTTDVTPKR).

The protein belongs to the transferase hexapeptide repeat family.

It participates in amine and polyamine metabolism; carnitine metabolism. In terms of biological role, overproduction of CaiE stimulates the activity of CaiB and CaiD. The polypeptide is Carnitine operon protein CaiE (Escherichia coli O6:K15:H31 (strain 536 / UPEC)).